The sequence spans 179 residues: Guanosine-3',5'-bis(diphosphate) 3'-pyrophosphohydrolase MESH1 (179 aa).

Glycine 2 carries the post-translational modification N-acetylglycine. Position 25 is an N6-acetyllysine (lysine 25). The HD domain occupies 32-127 (YINHPIGVAR…VKLADKLYNL (96 aa)). Mn(2+) is bound by residues histidine 35, histidine 61, and aspartate 62. Catalysis depends on nucleophile residues glutamate 65 and aspartate 66. The residue at position 97 (lysine 97) is an N6-acetyllysine. Residue aspartate 122 coordinates Mn(2+). Position 123 is an N6-acetyllysine (lysine 123).

Belongs to the MESH1 family. Mn(2+) is required as a cofactor.

The enzyme catalyses guanosine 3',5'-bis(diphosphate) + H2O = GDP + diphosphate + H(+). In terms of biological role, ppGpp hydrolyzing enzyme involved in starvation response. This Homo sapiens (Human) protein is Guanosine-3',5'-bis(diphosphate) 3'-pyrophosphohydrolase MESH1 (HDDC3).